A 180-amino-acid chain; its full sequence is Inner membrane-spanning protein YciB (180 aa).

5 helical membrane passes run 22 to 42 (IFVA…FTWL), 50 to 70 (MTLV…AFHS), 72 to 92 (LFIK…LLVS), 121 to 141 (LSWA…AFWL), and 149 to 169 (FKVF…GVYI).

The protein belongs to the YciB family.

It is found in the cell inner membrane. Functionally, plays a role in cell envelope biogenesis, maintenance of cell envelope integrity and membrane homeostasis. The protein is Inner membrane-spanning protein YciB of Yersinia pseudotuberculosis serotype O:1b (strain IP 31758).